The sequence spans 524 residues: FAD-dependent monooxygenase opdD (524 aa).

FAD is bound by residues glutamate 48 and arginine 145.

The protein belongs to the paxM FAD-dependent monooxygenase family.

Its pathway is secondary metabolite biosynthesis. FAD-dependent monooxygenase; part of the gene cluster that mediates the biosynthesis of oxopyrrolidines, polyketide-amino acid hybrid compounds with feature structures of tetramic acid. Does not seem to play a role in oxopyrrolidines A and B biosynthesis. May be involved in further modifications of these oxopyrrolidines. The sequence is that of FAD-dependent monooxygenase opdD from Penicillium oxalicum (strain 114-2 / CGMCC 5302) (Penicillium decumbens).